The following is a 357-amino-acid chain: Transcription factor PCF6 (357 aa).

The tract at residues 1-29 is disordered; the sequence is MEAAVGDGEGGGGGGGRGKRGRGGGGGEM. Gly residues predominate over residues 7–16; sequence DGEGGGGGGG. The TCP domain maps to 52-110; that stretch reads GKDRHSKVYTAKGIRDRRVRLSVATAIQFYDLQDRLGFDQPSKAIEWLINAASPAIDTL. 2 disordered regions span residues 125 to 162 and 281 to 307; these read AADA…DKEV and ANRG…QQLQ. Polar residues-rich tracts occupy residues 142-155 and 284-295; these read LSNK…SETS and GTLQSNSPSNMS.

As to quaternary structure, forms homodimers and heterodimers.

It is found in the nucleus. Transcription activator. Binds the promoter core sequence 5'-GGNCC-3'. The chain is Transcription factor PCF6 (PCF6) from Oryza sativa subsp. japonica (Rice).